The following is a 543-amino-acid chain: MTKFIFVTGGVVSSLGKGITAASLAAVLEARGLKVTMTKMDPYINVDPGTMSPFQHGEVFVTEDGAETDLDLGYYERFLRHSKMSKTNNFTSGRIYQTVLNKERRGDYLGGTVQVIPHITDEIKHRIHASGEGHDIAIIEIGGTVGDIESLPFMEAVRQMQVELGRNRAMLMHLTLVPYISSAGETKTKPTQHSVKELRSIGLQPDVLICRSEHAIGEENRRKIALFTNVEERAVITCEDADTIYQIPRTLYEQDLDDIICERFGIDAPEADLSDWDKVVDGLLNAQGKVTVAIVGKYVELPDAYKSINEALLHAGITHKTQVEIDYVDAEALETDDSLLARLEQADSILVPGGFGERGKLGKMRAIKFARENKMPYLGICLGMQLAVIEYATNVLGLEADSTEFNRKAAEPIIGLITEWLDEKGELQVRTDDSDLGGTMRLGSQKAELVEGSKLHQIYGAKLITERHRHRYEMNNRYIEPLEQAGMSISGYSAKQHLVESVEIADHPWFIGVQFHPEFTSSPREGHPLFASFVKAAIDHQNI.

The segment at 1 to 266 is amidoligase domain; the sequence is MTKFIFVTGG…DDIICERFGI (266 aa). Residue Ser-13 coordinates CTP. Ser-13 serves as a coordination point for UTP. ATP contacts are provided by residues 14 to 19 and Asp-71; that span reads SLGKGI. 2 residues coordinate Mg(2+): Asp-71 and Glu-140. Residues 147–149, 187–192, and Lys-223 contribute to the CTP site; these read DIE and KTKPTQ. Residues 187–192 and Lys-223 contribute to the UTP site; that span reads KTKPTQ. The region spanning 291 to 543 is the Glutamine amidotransferase type-1 domain; sequence TVAIVGKYVE…VKAAIDHQNI (253 aa). Gly-354 contributes to the L-glutamine binding site. Catalysis depends on Cys-381, which acts as the Nucleophile; for glutamine hydrolysis. L-glutamine is bound by residues 382–385, Glu-404, and Arg-471; that span reads LGMQ. Active-site residues include His-516 and Glu-518.

The protein belongs to the CTP synthase family. In terms of assembly, homotetramer.

The catalysed reaction is UTP + L-glutamine + ATP + H2O = CTP + L-glutamate + ADP + phosphate + 2 H(+). The enzyme catalyses L-glutamine + H2O = L-glutamate + NH4(+). It carries out the reaction UTP + NH4(+) + ATP = CTP + ADP + phosphate + 2 H(+). It functions in the pathway pyrimidine metabolism; CTP biosynthesis via de novo pathway; CTP from UDP: step 2/2. Allosterically activated by GTP, when glutamine is the substrate; GTP has no effect on the reaction when ammonia is the substrate. The allosteric effector GTP functions by stabilizing the protein conformation that binds the tetrahedral intermediate(s) formed during glutamine hydrolysis. Inhibited by the product CTP, via allosteric rather than competitive inhibition. Catalyzes the ATP-dependent amination of UTP to CTP with either L-glutamine or ammonia as the source of nitrogen. Regulates intracellular CTP levels through interactions with the four ribonucleotide triphosphates. This chain is CTP synthase, found in Psychrobacter sp. (strain PRwf-1).